The sequence spans 121 residues: MSFYESVFIIRQDVSLNDIDKIVDDFAKIIKDNNGTIIKKEYWGLRTLAYKIGNNKKGHYYFLGLDITGNVKEELERKMKLNENIIRFLTIQADSISSEPSPILKNQSTENTPVIDVTINN.

This sequence belongs to the bacterial ribosomal protein bS6 family.

In terms of biological role, binds together with bS18 to 16S ribosomal RNA. In Rickettsia conorii (strain ATCC VR-613 / Malish 7), this protein is Small ribosomal subunit protein bS6.